The chain runs to 351 residues: UDP-N-acetylglucosamine--N-acetylmuramyl-(pentapeptide) pyrophosphoryl-undecaprenol N-acetylglucosamine transferase (351 aa).

UDP-N-acetyl-alpha-D-glucosamine-binding positions include 12-14 (TGG), Asn124, Arg160, Ser188, Ile239, 258-263 (ALTVCE), and Gln283.

The protein belongs to the glycosyltransferase 28 family. MurG subfamily.

The protein resides in the cell inner membrane. The enzyme catalyses di-trans,octa-cis-undecaprenyl diphospho-N-acetyl-alpha-D-muramoyl-L-alanyl-D-glutamyl-meso-2,6-diaminopimeloyl-D-alanyl-D-alanine + UDP-N-acetyl-alpha-D-glucosamine = di-trans,octa-cis-undecaprenyl diphospho-[N-acetyl-alpha-D-glucosaminyl-(1-&gt;4)]-N-acetyl-alpha-D-muramoyl-L-alanyl-D-glutamyl-meso-2,6-diaminopimeloyl-D-alanyl-D-alanine + UDP + H(+). Its pathway is cell wall biogenesis; peptidoglycan biosynthesis. Its function is as follows. Cell wall formation. Catalyzes the transfer of a GlcNAc subunit on undecaprenyl-pyrophosphoryl-MurNAc-pentapeptide (lipid intermediate I) to form undecaprenyl-pyrophosphoryl-MurNAc-(pentapeptide)GlcNAc (lipid intermediate II). The chain is UDP-N-acetylglucosamine--N-acetylmuramyl-(pentapeptide) pyrophosphoryl-undecaprenol N-acetylglucosamine transferase from Actinobacillus pleuropneumoniae serotype 5b (strain L20).